Reading from the N-terminus, the 414-residue chain is MSSPDAGYASDDQSQTQSALPAVMAGLGPCPWAESLSPIGDMKVKGEAPANSGAPAGAAGRAKGESRIRRPMNAFMVWAKDERKRLAQQNPDLHNAELSKMLGKSWKALTLAEKRPFVEEAERLRVQHMQDHPNYKYRPRRRKQVKRLKRVEGGFLHGLAEPQAAALGPEGGRVAMDGLGLQFPEQGFPAGPPLLPPHMGGHYRDCQSLGAPPLDGYPLPTPDTSPLDGVDPDPAFFAAPMPGDCPAAGTYSYAQVSDYAGPPEPPAGPMHPRLGPEPAGPSIPGLLAPPSALHVYYGAMGSPGAGGGRGFQMQPQHQHQHQHQHHPPGPGQPSPPPEALPCRDGTDPSQPAELLGEVDRTEFEQYLHFVCKPEMGLPYQGHDSGVNLPDSHGAISSVVSDASSAVYYCNYPDV.

2 disordered regions span residues 1–22 (MSSP…ALPA) and 36–66 (LSPI…KGES). Over residues 47-61 (EAPANSGAPAGAAGR) the composition is skewed to low complexity. Positions 68 to 136 (IRRPMNAFMV…QHMQDHPNYK (69 aa)) form a DNA-binding region, HMG box. Disordered stretches follow at residues 256–286 (VSDY…IPGL) and 305–352 (AGGG…SQPA). The region spanning 280 to 413 (GPSIPGLLAP…SAVYYCNYPD (134 aa)) is the Sox C-terminal domain. Residues 327–339 (PPGPGQPSPPPEA) are compositionally biased toward pro residues. The 9aaTAD signature appears at 361–369 (TEFEQYLHF).

In terms of assembly, interacts with CTNNB1, LEF1 and TCF4. In terms of tissue distribution, expressed in adult heart, lung, spleen, testis, ovary, placenta, fetal lung, and kidney. In normal gastrointestinal tract, it is preferentially expressed in esophagus, stomach and small intestine than in colon and rectum.

It localises to the nucleus. In terms of biological role, acts as a transcription regulator that binds target promoter DNA and bends the DNA. Binds to the sequences 5'-AACAAT-'3 or 5'-AACAAAG-3'. Modulates transcriptional regulation via WNT3A. Inhibits Wnt signaling. Promotes degradation of activated CTNNB1. Plays a key role in the regulation of embryonic development. Required for normal development of the definitive gut endoderm. Required for normal looping of the embryonic heart tube. Plays an important role in embryonic and postnatal vascular development, including development of arteries. Plays an important role in postnatal angiogenesis, where it is functionally redundant with SOX18. Required for the generation and maintenance of fetal hematopoietic stem cells, and for fetal hematopoiesis. Probable transcriptional activator in the premeiotic germ cells. This chain is Transcription factor SOX-17 (SOX17), found in Homo sapiens (Human).